A 389-amino-acid polypeptide reads, in one-letter code: 3-oxo-Delta(4,5)-steroid 5-beta-reductase (389 aa).

NADP(+) contacts are provided by residues 35 to 37 (TGI), 63 to 64 (RR), 81 to 82 (DI), threonine 105, and glutamine 143. Active-site residues include lysine 147 and tyrosine 179. NADP(+)-binding positions include tyrosine 179, isoleucine 206, and 213 to 215 (SMM).

Belongs to the short-chain dehydrogenases/reductases (SDR) family. Highly divergent. In terms of assembly, homodimer.

It catalyses the reaction 5beta-cholestan-3-one + NADP(+) = cholest-4-en-3-one + NADPH + H(+). It carries out the reaction 4,5beta-dihydrocortisone + NADP(+) = cortisone + NADPH + H(+). In terms of biological role, involved in cardenolide biosynthesis. Catalyzes the stereospecific conversion of progesterone to 5-beta-pregnane-3,20-dione. Can use progesterone, testosterone, 4-androstene-3,17-dione, cortisol and cortisone as substrates, but not pregnenolone, 21-OH-pregnenolone or isoprogesterone. NADPH could not be replaced by NADH. This is 3-oxo-Delta(4,5)-steroid 5-beta-reductase from Digitalis lanata (Grecian foxglove).